We begin with the raw amino-acid sequence, 647 residues long: tRNA uridine 5-carboxymethylaminomethyl modification enzyme MnmG (647 aa).

FAD is bound by residues Gly-22 to Gly-27, Val-134, and Ser-189. Gly-283 to Phe-297 is an NAD(+) binding site. Residue Gln-380 participates in FAD binding.

Belongs to the MnmG family. As to quaternary structure, homodimer. Heterotetramer of two MnmE and two MnmG subunits. FAD serves as cofactor.

It is found in the cytoplasm. Its function is as follows. NAD-binding protein involved in the addition of a carboxymethylaminomethyl (cmnm) group at the wobble position (U34) of certain tRNAs, forming tRNA-cmnm(5)s(2)U34. This is tRNA uridine 5-carboxymethylaminomethyl modification enzyme MnmG from Desulfotalea psychrophila (strain LSv54 / DSM 12343).